Consider the following 541-residue polypeptide: Protein wntless homolog (541 aa).

Topologically, residues 1 to 15 are cytoplasmic; the sequence is MAGAIIENMGTKKLC. A helical transmembrane segment spans residues 16-36; the sequence is IVGGILLVFQIIAFLVGGLIA. Residues 37 to 232 lie on the Lumenal side of the membrane; that stretch reads PGPTTAVSYM…GIHQNGGFTK (196 aa). Residues 101 to 232 are interaction with Wnt proteins; that stretch reads MEMSPWFQFM…GIHQNGGFTK (132 aa). Residues 233–253 traverse the membrane as a helical segment; sequence VWFAMKTFLTPSIFIIMVWYW. The Cytoplasmic portion of the chain corresponds to 254-268; it reads RRITMMSRPPVLLEK. Residues 269–289 traverse the membrane as a helical segment; the sequence is VIFALGISMTFINIPVEWFSI. Residues 290 to 303 lie on the Lumenal side of the membrane; that stretch reads GFDWTWMLLFGDIR. A helical transmembrane segment spans residues 304-324; the sequence is QGIFYAMLLSFWIIFCGEHMM. At 325 to 331 the chain is on the cytoplasmic side; sequence DQHERNH. A helical membrane pass occupies residues 332–352; it reads IAGYWKQVGPIAVGSFCLFIF. Over 353-380 the chain is Lumenal; it reads DMCERGVQLTNPFYSIWTTDIGTELAMA. Residues 381–401 form a helical membrane-spanning segment; the sequence is FIIVAGICLCLYFLFLCFMVF. The Cytoplasmic segment spans residues 402–431; it reads QVFRNISGKQSSLPAMSKVRRLHYEGLIFR. The helical transmembrane segment at 432 to 452 threads the bilayer; that stretch reads FKFLMLITLACAAMTVIFFIV. The Lumenal portion of the chain corresponds to 453–471; sequence SQVTEGHWKWGGVTVQVNS. A helical membrane pass occupies residues 472 to 492; it reads AFFTGIYGMWNLYVFALMFLY. Over 493–541 the chain is Cytoplasmic; that stretch reads APSHKNYGEDQSNGDLGVHSGEELQLTTTITHVDGPTEIYKLTRKEAQE.

The protein belongs to the wntless family. As to quaternary structure, interacts with WNT3A. Interacts with WNT1, WNT3 and WNT5A.

The protein localises to the golgi apparatus membrane. The protein resides in the cytoplasmic vesicle membrane. It is found in the cell membrane. It localises to the endoplasmic reticulum membrane. Its subcellular location is the early endosome membrane. In terms of biological role, regulates Wnt proteins sorting and secretion in a feedback regulatory mechanism. This reciprocal interaction plays a key role in the regulation of expression, subcellular location, binding and organelle-specific association of Wnt proteins. Also plays an important role in establishment of the anterior-posterior body axis formation during development. The sequence is that of Protein wntless homolog (WLS) from Pongo abelii (Sumatran orangutan).